Reading from the N-terminus, the 351-residue chain is DNA polymerase IV (351 aa).

Residues 4–185 (IIHVDMDCFF…LPLAKIPGVG (182 aa)) form the UmuC domain. The Mg(2+) site is built by Asp-8 and Asp-103. Glu-104 is a catalytic residue.

The protein belongs to the DNA polymerase type-Y family. Monomer. The cofactor is Mg(2+).

The protein resides in the cytoplasm. It carries out the reaction DNA(n) + a 2'-deoxyribonucleoside 5'-triphosphate = DNA(n+1) + diphosphate. Functionally, poorly processive, error-prone DNA polymerase involved in untargeted mutagenesis. Copies undamaged DNA at stalled replication forks, which arise in vivo from mismatched or misaligned primer ends. These misaligned primers can be extended by PolIV. Exhibits no 3'-5' exonuclease (proofreading) activity. May be involved in translesional synthesis, in conjunction with the beta clamp from PolIII. The sequence is that of DNA polymerase IV from Escherichia coli O139:H28 (strain E24377A / ETEC).